Reading from the N-terminus, the 312-residue chain is Transcriptional regulator protein Pur-beta (312 aa).

The interval 1–32 is disordered; sequence MADGDSGSERGGGGGPCGFQPASRGGGEQETQ. At Ala-2 the chain carries N-acetylalanine. Residues Ser-6 and Ser-8 each carry the phosphoserine modification. Arg-24 carries the omega-N-methylarginine modification. Residues 28 to 254 form a DNA-binding region; the sequence is EQETQELASK…LRVSEVKPSY (227 aa). Residue Thr-31 is modified to Phosphothreonine. Ser-101 is modified (phosphoserine). Omega-N-methylarginine is present on Arg-152. Residue Lys-267 is modified to N6-acetyllysine. Positions 284–295 are enriched in basic and acidic residues; that stretch reads ERQRDKLYERRG. Positions 284–312 are disordered; the sequence is ERQRDKLYERRGGGSGGGEESEGEEVDED. Arg-294 is subject to Omega-N-methylarginine. Phosphoserine occurs at positions 298 and 304. The span at 302-312 shows a compositional bias: acidic residues; it reads EESEGEEVDED.

Belongs to the PUR DNA-binding protein family. Homodimer, heterodimer with PURA and heterotrimer with PURA and YBX1/Y-box protein 1. Interacts with MYOCD and SRF. As to expression, expressed in myocardium of heart failure patients.

The protein resides in the nucleus. Transcriptional regulator which can act as an activator or a repressor. Represses the transcription of ACTA2 in fibroblasts and smooth muscle cells via its ability to interact with the purine-rich strand of a MCAT- containing element in the 5' flanking region of the gene. Represses the transcription of MYOCD, capable of repressing all isoforms of MYOCD but the magnitude of the repressive effects is most notable for the SMC- specific isoforms. Promotes hepatic glucose production by activating the transcription of ADCY6, leading to cAMP accumulation, increased PKA activity, CREB activation, and increased transcription of PCK1 and G6PC genes. Has capacity to bind repeated elements in single-stranded DNA such as the purine-rich single strand of the PUR element located upstream of the MYC gene. Participates in transcriptional and translational regulation of alpha-MHC expression in cardiac myocytes by binding to the purine-rich negative regulatory (PNR) element Modulates constitutive liver galectin-3 gene transcription by binding to its promoter. May play a role in the dendritic transport of a subset of mRNAs. This chain is Transcriptional regulator protein Pur-beta (PURB), found in Homo sapiens (Human).